The following is a 562-amino-acid chain: NAD-dependent malic enzyme (562 aa).

Tyr101 serves as the catalytic Proton donor. Arg154 is an NAD(+) binding site. The active-site Proton acceptor is the Lys172. The a divalent metal cation site is built by Glu243, Asp244, and Asp267. Residues Asp267 and Asn415 each coordinate NAD(+).

This sequence belongs to the malic enzymes family. In terms of assembly, homotetramer. Requires Mg(2+) as cofactor. The cofactor is Mn(2+).

The enzyme catalyses (S)-malate + NAD(+) = pyruvate + CO2 + NADH. It carries out the reaction oxaloacetate + H(+) = pyruvate + CO2. The protein is NAD-dependent malic enzyme of Shewanella oneidensis (strain ATCC 700550 / JCM 31522 / CIP 106686 / LMG 19005 / NCIMB 14063 / MR-1).